Reading from the N-terminus, the 170-residue chain is Acetyl-CoA decarbonylase/synthase complex subunit epsilon 1 (170 aa).

Belongs to the CdhB family. Heterotetramer of two alpha and two epsilon subunits. The ACDS complex is made up of alpha, epsilon, beta, gamma and delta subunits with a probable stoichiometry of (alpha(2)epsilon(2))(4)-beta(8)-(gamma(1)delta(1))(8).

It participates in one-carbon metabolism; methanogenesis from acetate. Functionally, part of a complex that catalyzes the reversible cleavage of acetyl-CoA, allowing growth on acetate as sole source of carbon and energy. The alpha-epsilon subcomponent functions as a carbon monoxide dehydrogenase. The precise role of the epsilon subunit is unclear; it may have a stabilizing role within the alpha(2)epsilon(2) component and/or be involved in electron transfer to FAD during a potential FAD-mediated CO oxidation. The polypeptide is Acetyl-CoA decarbonylase/synthase complex subunit epsilon 1 (cdhB1) (Methanosarcina thermophila).